We begin with the raw amino-acid sequence, 243 residues long: Large ribosomal subunit protein uL2 (243 aa).

The interval 198–243 (VDHPFGGGGRQHPGKPKSVSRDTPPGRKVGDIASKRTGRGGKGGQE) is disordered. The segment covering 221–231 (PPGRKVGDIAS) has biased composition (basic and acidic residues).

This sequence belongs to the universal ribosomal protein uL2 family. Part of the 50S ribosomal subunit. Forms a bridge to the 30S subunit in the 70S ribosome.

Its function is as follows. One of the primary rRNA binding proteins. Required for association of the 30S and 50S subunits to form the 70S ribosome, for tRNA binding and peptide bond formation. It has been suggested to have peptidyltransferase activity; this is somewhat controversial. Makes several contacts with the 16S rRNA in the 70S ribosome. This is Large ribosomal subunit protein uL2 from Natronomonas pharaonis (strain ATCC 35678 / DSM 2160 / CIP 103997 / JCM 8858 / NBRC 14720 / NCIMB 2260 / Gabara) (Halobacterium pharaonis).